We begin with the raw amino-acid sequence, 232 residues long: Large ribosomal subunit protein uL1 (232 aa).

It belongs to the universal ribosomal protein uL1 family. As to quaternary structure, part of the 50S ribosomal subunit.

Functionally, binds directly to 23S rRNA. The L1 stalk is quite mobile in the ribosome, and is involved in E site tRNA release. Protein L1 is also a translational repressor protein, it controls the translation of the L11 operon by binding to its mRNA. This is Large ribosomal subunit protein uL1 from Pelotomaculum thermopropionicum (strain DSM 13744 / JCM 10971 / SI).